Here is a 195-residue protein sequence, read N- to C-terminus: Cyclin-dependent kinase inhibitor 7 (195 aa).

Residues 1 to 11 (MSETKPKRDSE) are compositionally biased toward basic and acidic residues. Disordered regions lie at residues 1–50 (MSET…SVSD), 61–80 (EEED…SSET), and 117–154 (SSEN…TQAE). 2 stretches are compositionally biased toward low complexity: residues 37-50 (SSSS…SVSD) and 68-80 (SSSI…SSET). A Phosphothreonine; by KIN10 modification is found at T151.

This sequence belongs to the CDI family. ICK/KRP subfamily. As to quaternary structure, specifically interacts with CDKA-1, but not with CDKB1-1. Interacts with CYCD4-1. Binds to FBL17. In terms of processing, ubiquitinated by SCF(FBL17). Ubiquitination leads to its subsequent degradation, thus controlling cell cycle progression. In terms of tissue distribution, expressed in flowers, in developing pollen, and at lower levels in roots and leaves.

It localises to the nucleus. Its subcellular location is the nucleoplasm. Binds and inhibits CYCD2-1/CDKA-1 complex kinase activity. May target specifically CDKA-1. The chain is Cyclin-dependent kinase inhibitor 7 (KRP7) from Arabidopsis thaliana (Mouse-ear cress).